The chain runs to 713 residues: MAKPSHSSYVLQQLNNQREWGFLCDCCIAIDDIYFQAHKAVLAACSSYFRMFFMNHQHSTAQLNLSNMKISAECFDLILQFMYLGKIMTAPSSFEQFKVAMNYLQLYNVPDCLEDIQDADCSSSKCSSSASSRQSSKMIFGVRMYEDTVARNGNEANRWCAEPSSTVNTPHHREPEEESLQLANFPEPLFDVCKKSSVSKLSTPKERVSRRFGRSFTCDSCGFGFSCEKLLDEHVLTCTNRHSYQNTTRAYHRIVDIRDGKDSNIKAELAEKDSSKTFSAQPDKYREDANQAPDDSASTTGSRKSTVEAGIAGEEKSRATETKRIIIKMEPEDIPADDMKDFNIIKVTEKDCNESTDNDELEDEPEEPFYRYYVEEDVGIKKSGRKTLKPRMSISVDERGGLENMRPPNNTSPIQEDAENASCELCGLTITEEDLSSHYLAKHIENICACGKCGQILVKGRQLQEHAQRCGEPQDLTMNGLGNADEKMDMEENPDEQSEIRDMFVEMLDDFRDNHYQINSIQKKQLFKHSACPFRCPNCGQRFETENLVVEHMSSCLDQDMFKGAIMEENERDHRRKHFCNLCGKGFYQRCHLREHYTVHTKEKQFVCQTCGKQFLRERQLRLHNDMHKGMARYVCSICDQGNFRKHDHVRHMISHLSGGETICQVCFQIFPNNEQLEQHMDVHLYTCGICGAKFNLRKDMRSHYNAKHLKRT.

Lysine 3 participates in a covalent cross-link: Glycyl lysine isopeptide (Lys-Gly) (interchain with G-Cter in SUMO2). The BTB domain maps to 24–91 (CDCCIAIDDI…MYLGKIMTAP (68 aa)). Glycyl lysine isopeptide (Lys-Gly) (interchain with G-Cter in SUMO2) cross-links involve residues lysine 200 and lysine 205. The segment at 216 to 242 (FTCDSCGFGFSCEKLLDEHVLTCTNRH) adopts a C2H2-type 1; atypical zinc-finger fold. Glycyl lysine isopeptide (Lys-Gly) (interchain with G-Cter in SUMO2) cross-links involve residues lysine 261, lysine 266, lysine 276, lysine 284, lysine 304, lysine 316, lysine 328, lysine 340, and lysine 346. The interval 270 to 319 (AEKDSSKTFSAQPDKYREDANQAPDDSASTTGSRKSTVEAGIAGEEKSRA) is disordered. Phosphoserine is present on serine 355. The residue at position 356 (threonine 356) is a Phosphothreonine. Lysine 381 participates in a covalent cross-link: Glycyl lysine isopeptide (Lys-Gly) (interchain with G-Cter in SUMO2). The C2H2-type 2; atypical zinc-finger motif lies at 448–470 (CACGKCGQILVKGRQLQEHAQRC). Residue lysine 528 forms a Glycyl lysine isopeptide (Lys-Gly) (interchain with G-Cter in SUMO2) linkage. Residues 533–558 (PFRCPNCGQRFETENLVVEHMSSCLD) form a UBZ-type zinc finger. Lysine 563 participates in a covalent cross-link: Glycyl lysine isopeptide (Lys-Gly) (interchain with G-Cter in SUMO2). 5 consecutive C2H2-type zinc fingers follow at residues 578–600 (HFCNLCGKGFYQRCHLREHYTVH), 606–628 (FVCQTCGKQFLRERQLRLHNDMH), 634–656 (YVCSICDQGNFRKHDHVRHMISH), 662–684 (TICQVCFQIFPNNEQLEQHMDVH), and 686–709 (YTCGICGAKFNLRKDMRSHYNAKH).

Homodimer. Homodimer. Interacts (via BTB domain) with TRIM28 (unphosphorylated or phosphorylated form). In terms of processing, sumoylated with SUMO2 at Lys-328 and to a lesser extent at Lys-266. Sumoylation inhibits its transcriptional repression activity and regulates its subcellular localization. In terms of tissue distribution, expressed strongly in thymus and spleen, less in lymph nodes and peripheral blood mononuclear cells (PBMCs) and weakly in bone marrow. Strongly expressed in immature, but weakly in mature bone marrow-lymphocyte B.

Its subcellular location is the nucleus. The protein resides in the nucleoplasm. In terms of biological role, acts as a transcriptional repressor. Represses cAMP-responsive element (CRE)-mediated transcriptional activation. In addition, has a role in translesion DNA synthesis. Requires for UV-inducible RAD18 loading, PCNA monoubiquitination, POLH recruitment to replication factories and efficient translesion DNA synthesis. Plays a key role in the transcriptional regulation of T lymphocyte development. In Mus musculus (Mouse), this protein is Zinc finger and BTB domain-containing protein 1 (Zbtb1).